We begin with the raw amino-acid sequence, 741 residues long: NAD(P)H-quinone oxidoreductase subunit 5, chloroplastic (741 aa).

A run of 14 helical transmembrane segments spans residues 9–29 (WIIP…LLLV), 40–60 (WAFP…DLSI), 89–109 (IDPL…MVLI), 122–139 (LRFF…LGLV), 147–167 (IHIF…FWFT), 185–205 (GDFG…SLEF), 219–239 (NGVN…GAVA), 258–278 (TPIS…FLVA), 280–300 (LLPI…LGII), 396–416 (TTFL…CFWS), 425–445 (WLYS…TAFY), 544–564 (LFPL…GIPF), 603–623 (IYSV…YGSV), and 719–739 (YLFV…FYFL).

The protein belongs to the complex I subunit 5 family. As to quaternary structure, NDH is composed of at least 16 different subunits, 5 of which are encoded in the nucleus.

It localises to the plastid. Its subcellular location is the chloroplast thylakoid membrane. The catalysed reaction is a plastoquinone + NADH + (n+1) H(+)(in) = a plastoquinol + NAD(+) + n H(+)(out). It catalyses the reaction a plastoquinone + NADPH + (n+1) H(+)(in) = a plastoquinol + NADP(+) + n H(+)(out). Functionally, NDH shuttles electrons from NAD(P)H:plastoquinone, via FMN and iron-sulfur (Fe-S) centers, to quinones in the photosynthetic chain and possibly in a chloroplast respiratory chain. The immediate electron acceptor for the enzyme in this species is believed to be plastoquinone. Couples the redox reaction to proton translocation, and thus conserves the redox energy in a proton gradient. In Liriodendron tulipifera (Tuliptree), this protein is NAD(P)H-quinone oxidoreductase subunit 5, chloroplastic (ndhF).